The sequence spans 874 residues: DNA mismatch repair protein MutS (874 aa).

Over residues 1–12 (MSNDRPLTHSEA) the composition is skewed to basic and acidic residues. Residues 1-20 (MSNDRPLTHSEAESSALRLG) form a disordered region. 661–668 (GPNASGKS) is an ATP binding site. The disordered stretch occupies residues 854 to 874 (RKSSMGDPPTAPEINQGELPF).

Belongs to the DNA mismatch repair MutS family.

In terms of biological role, this protein is involved in the repair of mismatches in DNA. It is possible that it carries out the mismatch recognition step. This protein has a weak ATPase activity. The polypeptide is DNA mismatch repair protein MutS (Thermosynechococcus vestitus (strain NIES-2133 / IAM M-273 / BP-1)).